Here is a 441-residue protein sequence, read N- to C-terminus: Histidine--tRNA ligase (441 aa).

The protein belongs to the class-II aminoacyl-tRNA synthetase family. As to quaternary structure, homodimer.

It localises to the cytoplasm. It catalyses the reaction tRNA(His) + L-histidine + ATP = L-histidyl-tRNA(His) + AMP + diphosphate + H(+). This Koribacter versatilis (strain Ellin345) protein is Histidine--tRNA ligase.